We begin with the raw amino-acid sequence, 297 residues long: Mitochondrial glycine transporter (297 aa).

3 Solcar repeats span residues 5–81 (TGHL…MRTA), 105–189 (LSMY…LKHT), and 211–295 (TSTA…LIKH). 6 helical membrane passes run 8 to 33 (LIGGFAGGLSSAVALQPLDLLKTRFQ), 56 to 82 (GTLPSAIRTSVGSALYLSSLNLMRTAL), 111 to 136 (LVTGAFARGTVGYITMPITIIKVRYE), 164 to 187 (GFGPTCLRDAPYSGLYVLLYEKLK), 215 to 241 (INSTSAILSASMATTVTAPFDTIKTRM), and 270 to 288 (GLSMRLTRKALSAGIAWGI).

Belongs to the mitochondrial carrier (TC 2.A.29) family. SLC25A38 subfamily.

It is found in the mitochondrion inner membrane. The catalysed reaction is glycine(in) = glycine(out). Functionally, mitochondrial glycine transporter that imports glycine into the mitochondrial matrix. Plays an important role in providing glycine for the first enzymatic step in heme biosynthesis, the condensation of glycine with succinyl-CoA to produce 5-aminolevulinate (ALA) in the mitochondrial matrix. This chain is Mitochondrial glycine transporter, found in Candida glabrata (strain ATCC 2001 / BCRC 20586 / JCM 3761 / NBRC 0622 / NRRL Y-65 / CBS 138) (Yeast).